A 450-amino-acid polypeptide reads, in one-letter code: MGAKISEDHPPQGNGGPLSNDPCSAGGEPRGAHLSRDGDGSVGDKGGDDDDDDDEGVVGAVSLTEASDKKKKKKRKPKKKKAKKATHQSSPPRVPLSELFTPGQYPTGEFLEYEDTNTARTTAAELRALGRKQLEDPAFLDDYRRAAEVHRQVRQWAQESVKPGQTLRDIANGIEDGVRALLGNQGLEPGDGLKSGMGFPTGLCLNHETAHYTPNPGQKDVVLQYEDVMKVDFGVHINGWIVDSAFTMSFDPTYDNLLAAVKDATNSGIKVNAAIQEAMESYEVEIAGKTYPVKPVRNISAHNIQHYRIHGGKSIPFIKNSDQTKMEEGEVFAIETFGTTGRGRLYDDVGIYGYKLENGGPSPASLPFASAKKLHKVIKENFGNIVFCRRYLERLGQERYLAGLNCLVSNGLLEAYEPLADVKGSYSAQFEHTILLRESSKEILSRGSDY.

Composition is skewed to basic and acidic residues over residues 1–10 (MGAKISEDHP) and 30–39 (RGAHLSRDGD). Residues 1–100 (MGAKISEDHP…PPRVPLSELF (100 aa)) are disordered. The segment covering 47 to 56 (GDDDDDDDEG) has biased composition (acidic residues). Basic residues predominate over residues 69 to 86 (KKKKKKRKPKKKKAKKAT). Position 211 (histidine 211) interacts with substrate. Residues aspartate 232, aspartate 243, and histidine 302 each coordinate a divalent metal cation. Histidine 310 is a substrate binding site. A divalent metal cation is bound by residues glutamate 335 and glutamate 431.

This sequence belongs to the peptidase M24A family. Methionine aminopeptidase eukaryotic type 2 subfamily. It depends on Co(2+) as a cofactor. Zn(2+) serves as cofactor. Mn(2+) is required as a cofactor. Requires Fe(2+) as cofactor.

It localises to the cytoplasm. The enzyme catalyses Release of N-terminal amino acids, preferentially methionine, from peptides and arylamides.. In terms of biological role, cotranslationally removes the N-terminal methionine from nascent proteins. The N-terminal methionine is often cleaved when the second residue in the primary sequence is small and uncharged (Met-Ala-, Cys, Gly, Pro, Ser, Thr, or Val). In Fusarium vanettenii (strain ATCC MYA-4622 / CBS 123669 / FGSC 9596 / NRRL 45880 / 77-13-4) (Fusarium solani subsp. pisi), this protein is Methionine aminopeptidase 2-2.